Consider the following 235-residue polypeptide: Keratin-associated protein 4-16 (235 aa).

The 16 X 5 AA repeats of C-C-[GIKRQVHEML]-[SPTRV]-[STVQRCP] stretch occupies residues 1 to 132; it reads MCSSKMPCSP…CCCPCCCLRP (132 aa). 16 repeat units span residues 23–27, 28–32, 33–37, 48–52, 53–57, 58–62, 63–67, 68–72, 78–82, 83–87, 88–92, 93–97, 103–107, 108–112, 118–122, and 128–132. Pro residues predominate over residues 203–224; it reads SPSPSLPSLSPPLPSPPLPSPH. Positions 203–235 are disordered; the sequence is SPSPSLPSLSPPLPSPPLPSPHFPSVNPKSMLQ.

It belongs to the KRTAP type 4 family. As to quaternary structure, interacts with hair keratins.

Functionally, in the hair cortex, hair keratin intermediate filaments are embedded in an interfilamentous matrix, consisting of hair keratin-associated proteins (KRTAP), which are essential for the formation of a rigid and resistant hair shaft through their extensive disulfide bond cross-linking with abundant cysteine residues of hair keratins. The matrix proteins include the high-sulfur and high-glycine-tyrosine keratins. This Homo sapiens (Human) protein is Keratin-associated protein 4-16.